The sequence spans 51 residues: Insulin (51 aa).

Disulfide bonds link C8–C37, C20–C50, and C36–C41.

This sequence belongs to the insulin family. Heterodimer of a B chain and an A chain linked by two disulfide bonds.

The protein localises to the secreted. Functionally, insulin decreases blood glucose concentration. It increases cell permeability to monosaccharides, amino acids and fatty acids. It accelerates glycolysis, the pentose phosphate cycle, and glycogen synthesis in liver. The polypeptide is Insulin (Seriola quinqueradiata (Five-ray yellowtail)).